Reading from the N-terminus, the 255-residue chain is 5'-nucleotidase SurE (255 aa).

A divalent metal cation is bound by residues aspartate 8, aspartate 9, serine 39, and asparagine 95.

The protein belongs to the SurE nucleotidase family. Requires a divalent metal cation as cofactor.

It localises to the cytoplasm. It catalyses the reaction a ribonucleoside 5'-phosphate + H2O = a ribonucleoside + phosphate. In terms of biological role, nucleotidase that shows phosphatase activity on nucleoside 5'-monophosphates. This is 5'-nucleotidase SurE from Herpetosiphon aurantiacus (strain ATCC 23779 / DSM 785 / 114-95).